The chain runs to 607 residues: LRR receptor kinase SERK2 (607 aa).

Positions 1-21 are cleaved as a signal peptide; that stretch reads MRELRVAVLIIAVSLPSFSAS. Residues 22–219 lie on the Extracellular side of the membrane; sequence DRQGDALYDM…QSGSHSSKIG (198 aa). 2 N-linked (GlcNAc...) asparagine glycosylation sites follow: Asn36 and Asn110. LRR repeat units lie at residues 87-110, 111-135, 136-159, and 160-183; these read LKYLTVLSLAGNRISGGIPEQFGN, LSSLTSLDLEDNLLVGEIPASLGQL, SKLQLLILSDNNFNGSIPDSLAKI, and SSLTDIRLAYNNLSGQIPGPLFQV. Asn149, Asn171, Asn187, and Asn206 each carry an N-linked (GlcNAc...) asparagine glycan. The chain crosses the membrane as a helical span at residues 220–240; it reads IVLGTVGGVIGLLIVAALFLF. The Cytoplasmic segment spans residues 241–607; that stretch reads CKGRRKSHLR…QEAIELSGGR (367 aa). A Protein kinase domain is found at 284–563; it reads FSERNVLGQG…VVRMLEGEGL (280 aa). Residues 290 to 298 and Lys312 contribute to the ATP site; that span reads LGQGGFGKV. The active-site Proton acceptor is the Asp411.

The protein belongs to the protein kinase superfamily. Ser/Thr protein kinase family.

The protein resides in the cell membrane. It catalyses the reaction L-seryl-[protein] + ATP = O-phospho-L-seryl-[protein] + ADP + H(+). It carries out the reaction L-threonyl-[protein] + ATP = O-phospho-L-threonyl-[protein] + ADP + H(+). Its function is as follows. May be involved in the regulation of plant growth through the brassinosteroid (BR) signaling pathway. The chain is LRR receptor kinase SERK2 from Oryza sativa subsp. japonica (Rice).